The primary structure comprises 210 residues: Probable membrane protein MT1774 (210 aa).

The next 2 membrane-spanning stretches (helical) occupy residues 43–63 and 165–185; these read AVVM…AAAA and ALAA…LLAL.

Its subcellular location is the cell membrane. This Mycobacterium tuberculosis (strain CDC 1551 / Oshkosh) protein is Probable membrane protein MT1774.